Reading from the N-terminus, the 159-residue chain is Small ribosomal subunit protein uS4 (159 aa).

The region spanning 106-158 (RRLQTLVFRMGLAKSIHHARQLVVHGHVLVAGRRVTSPGFLVPRELEDKITIE) is the S4 RNA-binding domain.

This sequence belongs to the universal ribosomal protein uS4 family. Part of the 30S ribosomal subunit. Contacts protein S5. The interaction surface between S4 and S5 is involved in control of translational fidelity.

One of the primary rRNA binding proteins, it binds directly to 16S rRNA where it nucleates assembly of the body of the 30S subunit. Its function is as follows. With S5 and S12 plays an important role in translational accuracy. This Pyrobaculum calidifontis (strain DSM 21063 / JCM 11548 / VA1) protein is Small ribosomal subunit protein uS4.